A 3739-amino-acid chain; its full sequence is MESGDSGLAAQGFLGWGADEEVAQELETEEESEGEGEETAAESEEEPDARLSDEDEEGKTKQECIVSDPSFSMVAVQREDSGITWETNSSRSSTPWASGESQTSGICSLEGSALTSPPGSVSFIMDEVKRTRKRTQKSKRGSPSLRRKGSKKRNSLESQDVLTNQEDGPSISESPVLNIENEKSSIGTYDKTRRKKTASNTPPITGAIYKEHKPLVLKPVYIGTVQYKIKMFNSVKEELIPLQFYGTLPKGYVIKEIHYRRGKDSSISLEPDLSNGGSNIVPQRKLAQSPEEDKVRELAPPWRGALSKGSRTSLFSHEEQKKTYADSNLNVPSSTEHAFPSSARNDTADQEENLSLPQMMPQQPADESKTHRMEPPSIPATMVLERAKEELEQNAQGKESSEDDASVLTGSADDVQQEGLVSVNHSMPWEAEKESLETGPPRPAPAIQEKFEPDMEGLEPISTEKTEQASEYVTSSEPIVHREEEHAPEPIVHREEEHAPEPIVHREEEHAPEPESIVHREEEHAPESIVHREEEHAPEPVPIVHREEEHAPEPESIVHREEEHAPEPIVHRDKGHALEPIVHREEEHAPEPIVHRDEGHAPEPIVHREEEHVPEPESIVRKGEEHAPEPIVHREEEQVPEPESIVHREEEHAPEPIVHREEEQVPEPESIVHREEEHAPEPMVLREEHAPEPIVRREEEHAPEPIVHREEEHAPEPMVHRKAQQLERGVETSTPITDITEPEDSSLEEEIIELDYPESPLASKETSPSPLSPEVEHRKEPILPTQMTFTPERITLSEEEREENESVSTDSAFVSEYSVLQDLNHTPEKLEVEAVSVSDVKSSNEPAVFSEDDEERESYSPAMTSVSEQSLSPSTTEKTSAIQSPLFSTVSPVLSGDEASENVCHSPESESAAEYSVPAHAQELLLKTGDHKLPLKSQRVSEPIIQAEDEKEDIGLLPPAALSQAVLSEDESLGSGSFASDSKLPFKPSVSQNATRESPQKTIDDMPQFKPRGLSDPATLLEEEKEAIGVGLSSSNEVSAVECALPPQTTELLSESHAPPPWAISSEQVVQSEEGSRDQQRGSFSSTPELGHTSLLLKGASSPTGLSEQGQEEDNIGPLSPDSAFASEFSFSPYPTQELEKRELGRDSPLCLTSPSEQTVLSEEDTEEADLFSPDSASQVSIPPYRIAETEQNKVEPDELLPTRSAPDYPYFSEADEEEAGSSVVTLVPEHSEPSQEREESSPCRPVFEDLSLPPSADKTGQAETMSDVPTISTSVSEYLILARQAKTQASLEPEAEDLVPPPTSGWEKRDAKSSLPAVTIAASSSALSSVVKEETTSVLPTSQPSVSPESTCVLKPEQEPTAPLTLTSADEQMALPRVGREKAVLDSQEATAHKSQDQTPEPRLPNVPGSGMKYSVLSDLGDEPKADVKLNLAPTVTSELEQRMLSKNEPEVAKPHSPPEETSISGPKVLSAVKTEVKQESKITRELPAASSGRERGAEHSPPVPPALPALTEETGKDTEASSSATTVPVTKLDSNSTKLGRDEVLTDPSLASPVEHPGLKGIGKSELGSGLPLPSMSASEVLRPEPKLPVNSGVEVEREDNEPPPLQVSPTSKPTVPNDKHEEITRSPDSENLVSDDLAPTLLAFRHEMNRQAEETSSPVPGSFLSGEQELIKLPPEPEKHKQLSEVPTAGSELIDSRDRDRSLGIEPVKPIGTEPGPSILEKGPAELQRRGKEQEENRKLPVPASAPLETASFDLPIEQKEPKRTLHEGQAVEVPDESSSSADKPELGVKQLAEKKENLEQPKPFVTTERASVTGSKVKESLISPKDNIWMLEKPDGLVNQHEDRKPGTGQLESSESTDLMSEKLGAASLDTDHTSETRNQETSKAPVSGEKLSQEPRRVQSKAVDDSEEGRKLASGNVEVLTQSKSVPAVKAKATPQPPETPEVTQKPSEKSLVTEQGLPAEKGKKGISSFKSWMSSLLFGSSIPDSKVSDNEDLETRPGPSVEKAVPAIEPKGTVPAEVNIAEKPAVHSLPEVTVKLAEEPKGVSVKSSISQDLKEKLTFLSNEDVLKQPKSNSENYGQKELPGFSEGMGESLATSVGDKHPGIHPCSPMGEKVGMEEAQNMAPLHITESQRRQKPEVSPPSMWNISARKEEPSSDHKETWLSSSDVVDRMPQKPKSAQSAFTRMNSEEPASMILPVESKGSLSDLGEDRLRQEMPKPTSLEHCEEEVERPTEEKDGWETRSFSLAGKRGLAEKQEIMAPLELRENEAVGELQRMPESRPFKLEESKAAERLEQRISPTEKLMEKPSKTLALDRREKEVQEWVFSEGEKQEYPPAAMPVPGASAVSLDKAQPHLLAKPTPVVEKPEHIVTEVYPEIRERKAAETQPHPQEEGKTLVEKTKVSRVESPHGEETDGHSLTQEGNLELEKSGESRVDLKEERRRFVMPELPLGASVAAEDGSVQPRPLSKDAARASDMTDETKHLGTPPTQPSAVEPQTLVLGTSVEHAVKKQETWSDRPTVHTFQTSKDDTEEMLKQSVLISKHHLEAVEDVHRNEPPSSAASNYAQFMLSASEISADGVPPMGGTAQEPEGTSVKDEEFSVTSKPAGLSEDQKSAFSIISEGCEILNIHAPAFIPSVDQEESEQMQDKLQYLEEKASFKSISVHDEKKAAASHKTQKSKLEVPDRKITSLKENKTKETHKTKEEIATDSGMGDFTPIQPTVSGEEDYFEKYTLIDYNLSPGSGKQKSTVEESSEEATKTLTSFPESSAEQALDHEYNLVKLDESFYGPEKDDSKLSHAEMQKSLAIQKPDDRNAPKGISRDVDSRSPGMPLFDVEEGVLSKRQIFPTTPKAVNPELLEEPPALSFFYKDLYEGACGEKNEGETASEGDSVDSETSFPRRHSDTDDGPGMYFEKYILKDDILHDESVTQEDQGQGLEEKPVGEEDSQQLRVAEREIRRKPETSFWEKNLEEQHKVVGREGEPTGHMETLDEAAMQQKAPITEQVRAVTQKMSYAVPFQDTRCVLESEPSSQGNEAGNASPDVNLNVPVQVSFPEEESAAGATYAPEVLQERLVPSVSREERLHNTPVQDEYDFVGSLNQEAASQAILPEEPGSESSPKEVLSQGSESFEHIREQELTSEGEPRMSASQEVWDRTEDQSARESVTAKTQKEPKKTQAESYCYTCKSLVSEMDKALDIHKDHEVSALDTAISAVKVQLGEFLENLQEKSLRIEAFVSEIESFFNTIEEKCSKNEKRLEMQNEEMMKRVLAQYDEKAQSFEEVKKKKMEFLHDQMVHFLQSMDTAKDTLETIVREAEELDETVFLASFEEINERLLSAMESTASLENMPAAFSLFEHYDDSSARSDQMLKQVAVPQPPRLEPQEPSSATSTTIAVYWSVNKEDVVDSFQVYCVEEPQDDQEINELVEEYRLTVKESCCIFEDLEPDRCYQVWVMAVNFTGCSLPSERAIFRTAPSTPVIHVEDCTVCWNTATVRWRPANPEATETYTLEYCRQHSPEGEGLRSFSGIKGHQLKVNLPPNDNYFFYVRATNASGTSEQSEAALISTRGTRFLLLRETAHPALQISANGTVISFSERRRLTEIPSVLGEELPACGQHYWETTVADSPAYRLGICTSSAVRAGALGQGETSWYMHCSEPQRYTFFYSGIVSEVHATERPARVGILLDYTNQRLLFINAESGQLLFIVRHRFNEGVHPAFALEKPGRCTLHLGLEPPDSVRHK.

13 disordered regions span residues 1–205 (MESG…PPIT), 268–814 (SLEP…SAFV), 835–884 (VSVS…AIQS), 967–1270 (LSED…SDVP), 1288–1313 (TQAS…RDAK), 1325–1637 (SSAL…NLVS), 1650–1969 (EMNR…EKGK), 1986–2016 (SSIP…AIEP), 2065–2246 (FLSN…WETR), 2273–2318 (AVGE…LALD), 2377–2498 (VYPE…SAVE), 2513–2532 (KKQE…TSKD), and 2579–2616 (SADG…SEDQ). The segment covering 18–47 (ADEEVAQELETEEESEGEGEETAAESEEEP) has biased composition (acidic residues). Over residues 48–62 (DARLSDEDEEGKTKQ) the composition is skewed to basic and acidic residues. Residues 84-106 (TWETNSSRSSTPWASGESQTSGI) show a composition bias toward polar residues. Over residues 130–153 (RTRKRTQKSKRGSPSLRRKGSKKR) the composition is skewed to basic residues. Ser-155 bears the Phosphoserine mark. 2 stretches are compositionally biased toward polar residues: residues 156–175 (LESQ…SESP) and 325–336 (ADSNLNVPSSTE). The stretch at 380–406 (ATMVLERAKEELEQNAQGKESSEDDAS) forms a coiled coil. 3 stretches are compositionally biased toward basic and acidic residues: residues 479 to 637 (IVHR…REEE), 644 to 663 (SIVH…REEE), and 670 to 730 (SIVH…ERGV). 2 tandem repeats follow at residues 482 to 493 (REEEHAPEPIVH) and 494 to 505 (REEEHAPEPIVH). The segment at 482–720 (REEEHAPEPI…EEHAPEPMVH (239 aa)) is 20 X 12 AA approximate tandem repeats of R-[DE]-[EK]-[EG]-H-[AV]-P-E-[PS]-[IM]-V-[HLR]. Residues 506-519 (REEEHAPEPESIVH) form a 3; approximate repeat. Repeat 4 spans residues 520-531 (REEEHAPESIVH). A 5; approximate repeat occupies 532–545 (REEEHAPEPVPIVH). The stretch at 546-559 (REEEHAPEPESIVH) is one 6; approximate repeat. 4 repeat units span residues 560–571 (REEEHAPEPIVH), 572–583 (RDKGHALEPIVH), 584–595 (REEEHAPEPIVH), and 596–607 (RDEGHAPEPIVH). The stretch at 608-621 (REEEHVPEPESIVR) is one 11; approximate repeat. Residues 622–633 (KGEEHAPEPIVH) form a 12; approximate repeat. The stretch at 634-647 (REEEQVPEPESIVH) is one 14; approximate repeat. Residues 648 to 659 (REEEHAPEPIVH) form repeat 15. The stretch at 660–673 (REEEQVPEPESIVH) is one 16; approximate repeat. 4 tandem repeats follow at residues 674-685 (REEEHAPEPMVL), 686-696 (REEHAPEPIVR), 697-708 (REEEHAPEPIVH), and 709-720 (REEEHAPEPMVH). The span at 740-756 (TEPEDSSLEEEIIELDY) shows a compositional bias: acidic residues. The residue at position 850 (Ser-850) is a Phosphoserine. Polar residues-rich tracts occupy residues 861–884 (PAMT…AIQS) and 1151–1161 (CLTSPSEQTVL). Basic and acidic residues-rich tracts occupy residues 1188-1197 (AETEQNKVEP) and 1230-1242 (EHSE…EESS). Residues 1337-1351 (TSVLPTSQPSVSPES) are compositionally biased toward polar residues. Composition is skewed to basic and acidic residues over residues 1441–1460 (LEQR…HSPP) and 1476–1486 (TEVKQESKITR). Positions 1522 to 1540 (ASSSATTVPVTKLDSNSTK) are enriched in polar residues. 6 stretches are compositionally biased toward basic and acidic residues: residues 1620 to 1631 (NDKHEEITRSPD), 1697 to 1706 (IDSRDRDRSL), 1726 to 1742 (GPAE…ENRK), 1760 to 1770 (IEQKEPKRTLH), 1786 to 1803 (DKPE…ENLE), and 1836 to 1850 (EKPD…DRKP). Residues 1854–1863 (QLESSESTDL) show a composition bias toward polar residues. Composition is skewed to basic and acidic residues over residues 1874–1885 (DTDHTSETRNQE), 1896–1916 (LSQE…EGRK), 1992–2001 (KVSDNEDLET), and 2153–2165 (ARKE…HKET). Positions 2181 to 2190 (KSAQSAFTRM) are enriched in polar residues. Ser-2192 carries the phosphoserine modification. 5 stretches are compositionally biased toward basic and acidic residues: residues 2212–2244 (GEDR…DGWE), 2279–2299 (RMPE…RLEQ), 2306–2318 (KLME…LALD), 2377–2419 (VYPE…ETDG), and 2429–2448 (ELEK…RRFV). Ser-2411 bears the Phosphoserine mark. Ser-2495 carries the phosphoserine modification. Residues 2513–2523 (KKQETWSDRPT) are compositionally biased toward basic and acidic residues. Residues 2640–2664 (SVDQEESEQMQDKLQYLEEKASFKS) are a coiled coil. Disordered stretches follow at residues 2667-2725 (VHDE…QPTV), 2742-2773 (LSPG…SSAE), 2791-2835 (GPEK…GMPL), 2881-2959 (EKNE…EREI), 3027-3047 (LESE…DVNL), and 3111-3174 (PEEP…QKEP). A compositionally biased stretch (basic and acidic residues) spans 2682-2709 (SKLEVPDRKITSLKENKTKETHKTKEEI). A required for RYR2 clustering region spans residues 2731 to 3041 (YFEKYTLIDY…SSQGNEAGNA (311 aa)). Residues 2762–2773 (KTLTSFPESSAE) show a composition bias toward polar residues. 2 stretches are compositionally biased toward basic and acidic residues: residues 2791-2804 (GPEK…HAEM) and 2812-2828 (KPDD…DVDS). Ser-2905 bears the Phosphoserine mark. The span at 2918-2929 (YILKDDILHDES) shows a compositional bias: basic and acidic residues. A compositionally biased stretch (polar residues) spans 3030–3047 (EPSSQGNEAGNASPDVNL). Positions 3153–3162 (VWDRTEDQSA) are enriched in basic and acidic residues. The tract at residues 3187-3214 (KSLVSEMDKALDIHKDHEVSALDTAISA) is amphipathic helix H1. The segment at 3215–3342 (VKVQLGEFLE…ERLLSAMEST (128 aa)) is B-box coiled-coil; BBC. Positions 3244–3323 (FNTIEEKCSK…REAEELDETV (80 aa)) form a coiled coil. The amphipathic helix H2 stretch occupies residues 3301-3318 (SMDTAKDTLETIVREAEE). 2 consecutive Fibronectin type-III domains span residues 3374–3475 (VPQP…TAPS) and 3476–3568 (TPVI…TRGT). Positions 3421-3437 (EINELVEEYRLTVKESC) are amphipathic helix H3. In terms of domain architecture, B30.2/SPRY spans 3550–3735 (NASGTSEQSE…LHLGLEPPDS (186 aa)).

In terms of assembly, interacts with PRKAR2A. Interacts with ACTN2, DES and DTNBP1/dysbindin. Interacts with DMD/dystrophin. Interacts with the calcineurin catalytic subunit PPP3CA. Interacts with TTN. Interacts with CAPN3; this interaction, which results in CMYA5 proteolysis, may protect CAPN3 from autolysis. Interacts with FSD2. In cardiac muscles, identified in a complex composed of FSD2, CMYA5 and RYR2. Post-translationally, phosphorylated by PKA. As to expression, expressed in skin as well as in cardiac muscle. Expressed in skeletal muscle (at protein level).

It localises to the nucleus. It is found in the cytoplasm. Its subcellular location is the perinuclear region. The protein resides in the myofibril. The protein localises to the sarcomere. It localises to the m line. It is found in the sarcoplasmic reticulum. May serve as an anchoring protein that mediates the subcellular compartmentation of protein kinase A (PKA) via binding to PRKAR2A. May attenuate calcineurin ability to induce slow-fiber gene program in muscle and may negatively modulate skeletal muscle regeneration. Plays a role in the assembly of ryanodine receptor (RYR2) clusters in striated muscle. This Mus musculus (Mouse) protein is Cardiomyopathy-associated protein 5 (Cmya5).